Reading from the N-terminus, the 344-residue chain is MSQSLFSLAFGVGTQNRQDAWLEVFYALPLLNPSAEIVAAVAPILGYSSGNQALAFTSQQAYQLADALKGIDAAQSALLSRLAESQKPLVATLLAEDAAPSSTPEAYLKLHLLSHRLVKPHGVNLSGIFPLLPNVAWTNIGAVDLAELAELQLEARLKGKLLEVFSVDKFPKMTDYVVPAGVRIADTARVRLGAYIGEGTTVMHEGFVNFNAGTEGPGMIEGRVSAGVFVGKGSDLGGGCSTMGTLSGGGNIVISVGEGCLIGANAGIGIPLGDRNIVEAGLYITAGTKVALLDEQNTLVKVVKARDLAGQPDLLFRRNSQNGAVECKTNKTAIELNEALHAHN.

Glu-205 is a Mg(2+) binding site. Glu-221 (acyl-anhydride intermediate) is an active-site residue. Residues Arg-223, Gly-238, Ser-241, Ala-264, 279 to 280, Gly-287, Lys-304, and 317 to 320 contribute to the succinyl-CoA site; these read EA and RRNS.

The protein belongs to the type 2 tetrahydrodipicolinate N-succinyltransferase family. As to quaternary structure, homotrimer.

Its subcellular location is the cytoplasm. It catalyses the reaction (S)-2,3,4,5-tetrahydrodipicolinate + succinyl-CoA + H2O = (S)-2-succinylamino-6-oxoheptanedioate + CoA. It participates in amino-acid biosynthesis; L-lysine biosynthesis via DAP pathway; LL-2,6-diaminopimelate from (S)-tetrahydrodipicolinate (succinylase route): step 1/3. In terms of biological role, catalyzes the conversion of the cyclic tetrahydrodipicolinate (THDP) into the acyclic N-succinyl-L-2-amino-6-oxopimelate using succinyl-CoA. The sequence is that of 2,3,4,5-tetrahydropyridine-2,6-dicarboxylate N-succinyltransferase from Pseudomonas paraeruginosa (strain DSM 24068 / PA7) (Pseudomonas aeruginosa (strain PA7)).